We begin with the raw amino-acid sequence, 327 residues long: MASASPEQNQNHCSAVNNSNMLMQGNLPTLTLSGKIRVTVTFFLFLLSTIFNASFLLKLQKWTQKKEKGKKLSRMKVLLKHLTLANLLETLIVMPLDGMWNITVQWYAGEFLCKVLSYLKLFSMYAPAFMMVVISLDRSLAITRPLAMKNNGKLGQSMIGLAWLLSGIFAGPQLYIFRMIHLADSSGQTEGFPQCVTHCSFPQWWHQAFYNFFTFSCLFIIPLFITLICNAKIIFTLTRVLHQDPHELQLNQSKNNIPRARLRTLKMTVAFATSFTVCWTPYYVLGIWYWFDPEMLNRVSDPVNHFFFLFALLNPCFDPLIYGYFSL.

Topologically, residues 1-37 (MASASPEQNQNHCSAVNNSNMLMQGNLPTLTLSGKIR) are extracellular. Residue Asn17 is glycosylated (N-linked (GlcNAc...) asparagine). A helical membrane pass occupies residues 38–57 (VTVTFFLFLLSTIFNASFLL). Over 58–76 (KLQKWTQKKEKGKKLSRMK) the chain is Cytoplasmic. The chain crosses the membrane as a helical span at residues 77–96 (VLLKHLTLANLLETLIVMPL). Residues 97–114 (DGMWNITVQWYAGEFLCK) are Extracellular-facing. Asn101 carries N-linked (GlcNAc...) asparagine glycosylation. Cys113 and Cys195 are oxidised to a cystine. The helical transmembrane segment at 115-136 (VLSYLKLFSMYAPAFMMVVISL) threads the bilayer. Residues 137-163 (DRSLAITRPLAMKNNGKLGQSMIGLAW) are Cytoplasmic-facing. The helical transmembrane segment at 164–183 (LLSGIFAGPQLYIFRMIHLA) threads the bilayer. At 184 to 211 (DSSGQTEGFPQCVTHCSFPQWWHQAFYN) the chain is on the extracellular side. The helical transmembrane segment at 212-231 (FFTFSCLFIIPLFITLICNA) threads the bilayer. The Cytoplasmic segment spans residues 232–280 (KIIFTLTRVLHQDPHELQLNQSKNNIPRARLRTLKMTVAFATSFTVCWT). Residues 281-299 (PYYVLGIWYWFDPEMLNRV) traverse the membrane as a helical segment. The Extracellular portion of the chain corresponds to 300 to 305 (SDPVNH). A helical membrane pass occupies residues 306–325 (FFFLFALLNPCFDPLIYGYF). Topologically, residues 326 to 327 (SL) are cytoplasmic.

It belongs to the G-protein coupled receptor 1 family.

The protein localises to the cell membrane. Functionally, receptor for gonadotropin releasing hormone (GnRH) that mediates the action of GnRH to stimulate the secretion of the gonadotropic hormones luteinizing hormone (LH) and follicle-stimulating hormone (FSH). This receptor mediates its action by association with G-proteins that activate a phosphatidylinositol-calcium second messenger system. The polypeptide is Gonadotropin-releasing hormone receptor (GNRHR) (Canis lupus familiaris (Dog)).